The chain runs to 183 residues: Putative manganese efflux pump MntP (183 aa).

6 helical membrane passes run 6-26 (LFLI…CIGL), 40-60 (IYFG…GFLF), 64-84 (IATM…IIMI), 101-121 (MNII…FTAL), 135-155 (LFIG…SKYL), and 158-178 (IDVI…FFGL).

The protein belongs to the MntP (TC 9.B.29) family.

It localises to the cell membrane. In terms of biological role, probably functions as a manganese efflux pump. The sequence is that of Putative manganese efflux pump MntP from Clostridium tetani (strain Massachusetts / E88).